We begin with the raw amino-acid sequence, 185 residues long: Pyruvate/ketoisovalerate oxidoreductases common subunit gamma (185 aa).

As to quaternary structure, heterotetramer of one alpha, one beta, one delta and one gamma chain.

It carries out the reaction 2 oxidized [2Fe-2S]-[ferredoxin] + pyruvate + CoA = 2 reduced [2Fe-2S]-[ferredoxin] + acetyl-CoA + CO2 + H(+). It catalyses the reaction 3-methyl-2-oxobutanoate + 2 oxidized [2Fe-2S]-[ferredoxin] + CoA = 2-methylpropanoyl-CoA + 2 reduced [2Fe-2S]-[ferredoxin] + CO2 + H(+). The polypeptide is Pyruvate/ketoisovalerate oxidoreductases common subunit gamma (porG) (Pyrococcus abyssi (strain GE5 / Orsay)).